A 157-amino-acid polypeptide reads, in one-letter code: Ribosomal RNA large subunit methyltransferase H (157 aa).

S-adenosyl-L-methionine is bound by residues Leu-74, Gly-106, and 125–130 (LSDMTL).

The protein belongs to the RNA methyltransferase RlmH family. In terms of assembly, homodimer.

It localises to the cytoplasm. The enzyme catalyses pseudouridine(1915) in 23S rRNA + S-adenosyl-L-methionine = N(3)-methylpseudouridine(1915) in 23S rRNA + S-adenosyl-L-homocysteine + H(+). Its function is as follows. Specifically methylates the pseudouridine at position 1915 (m3Psi1915) in 23S rRNA. In Desulfovibrio desulfuricans (strain ATCC 27774 / DSM 6949 / MB), this protein is Ribosomal RNA large subunit methyltransferase H.